Here is a 515-residue protein sequence, read N- to C-terminus: Low affinity ammonium transporter (515 aa).

Residues 1 to 78 are Extracellular-facing; that stretch reads MSTSSSVTQK…IIGNSFGTTN (78 aa). The helical transmembrane segment at 79 to 99 threads the bilayer; sequence AGQLSWFASAYSLTVGTFILI. The Cytoplasmic segment spans residues 100–111; that stretch reads AGRLGDIFGHKK. Residues 112–132 form a helical membrane-spanning segment; the sequence is FFVLGFFWYALWSLLAGFSVY. At 133–140 the chain is on the extracellular side; sequence SNQIFFDC. Residues 141-161 form a helical membrane-spanning segment; it reads CRAFQGMGPAFLLPNAIAILG. Residues 162–171 are Cytoplasmic-facing; that stretch reads RTYKPGRRKN. A helical membrane pass occupies residues 172-192; the sequence is MVFSLFGASAPGGFFLGAVFS. Over 193–202 the chain is Extracellular; that stretch reads SMLGQLAWWP. Residues 203–223 traverse the membrane as a helical segment; that stretch reads WAYWIMGIACFVLAVAGYFVI. At 224–241 the chain is on the cytoplasmic side; sequence PHTPMPSRDASSFKLLER. Residues 242 to 262 form a helical membrane-spanning segment; it reads IDFAGSVTGVVGLILFNFAWN. Topologically, residues 263-270 are extracellular; that stretch reads QGPVVGWQ. A helical membrane pass occupies residues 271–291; sequence TPYTYALLIVGTFFLVIFAYI. Topologically, residues 292 to 310 are cytoplasmic; the sequence is ESRAAFPLLPFAALSSDTA. A helical membrane pass occupies residues 311–331; sequence FVLSCIAAGWASFGIWIFYTW. Over 332-346 the chain is Extracellular; sequence QFMEDSRGQTPLLSS. A helical membrane pass occupies residues 347–367; sequence AQFSPVAISGFCAAVTTGFLL. At 368 to 374 the chain is on the cytoplasmic side; sequence SHTPPST. A helical membrane pass occupies residues 375–395; that stretch reads VMLFAMTAFTVGTILIATAPV. The Extracellular portion of the chain corresponds to 396-403; it reads HQTYWAQT. A helical membrane pass occupies residues 404 to 424; the sequence is FVSIIVMPWGMDMSFPAATIM. Residues 425–435 are Cytoplasmic-facing; the sequence is LSDSMPHEHQG. A helical membrane pass occupies residues 436–456; it reads LAASLVNTVVNYSISIGLGIA. At 457–479 the chain is on the extracellular side; it reads GTIESRVNDGGAKPLKGYRCSWY. A helical membrane pass occupies residues 480–500; it reads MGIGLSGLGIFVAATYAWSTF. Residues 501 to 515 lie on the Cytoplasmic side of the membrane; the sequence is MKSKKRISEKQHFIE.

Belongs to the major facilitator superfamily.

The protein resides in the cell membrane. Functionally, low affinity ammonium transporter of the plasma membrane. May be involved in drug resistance through pumping them out of the cell. This chain is Low affinity ammonium transporter, found in Saccharomyces cerevisiae (strain ATCC 204508 / S288c) (Baker's yeast).